We begin with the raw amino-acid sequence, 286 residues long: NH(3)-dependent NAD(+) synthetase (286 aa).

43–50 (GVSGGVDS) lines the ATP pocket. Residue D49 coordinates Mg(2+). R131 provides a ligand contact to deamido-NAD(+). T151 lines the ATP pocket. E156 provides a ligand contact to Mg(2+). Residues K164 and D171 each coordinate deamido-NAD(+). K180 and S202 together coordinate ATP. Residues 257–286 (HEASSHKRSPPASPDLGEIKKHYKQHAGKK) are disordered. Deamido-NAD(+) is bound at residue 262 to 263 (HK). Basic residues predominate over residues 277-286 (KHYKQHAGKK).

The protein belongs to the NAD synthetase family. Homodimer.

The catalysed reaction is deamido-NAD(+) + NH4(+) + ATP = AMP + diphosphate + NAD(+) + H(+). It functions in the pathway cofactor biosynthesis; NAD(+) biosynthesis; NAD(+) from deamido-NAD(+) (ammonia route): step 1/1. In terms of biological role, catalyzes the ATP-dependent amidation of deamido-NAD to form NAD. Uses ammonia as a nitrogen source. This is NH(3)-dependent NAD(+) synthetase from Aeropyrum pernix (strain ATCC 700893 / DSM 11879 / JCM 9820 / NBRC 100138 / K1).